Reading from the N-terminus, the 538-residue chain is MNQLCVERSPNISTATAYIKGKPKKSIERIKKKKDSNKSIKSQHKFEGSKISNKNNELKDVKSKDPKNYESYLNKNTKHKDILLKSKRSDNFKFSRRGFILSFTGNLEDFYNLSEEPLGKGTYGCVYKATDKLLKIQRAVKVVSKKKLKNIPRFRQEIDIMKNLDHPNVIKLLETFEDEEQIYLIMDLCTGGELFDKIIKKGSFVEMYASFIMKQIFSVLNYLHIRNICHRDIKPENFLFYDKSTESLIKIIDFGLAAYFNDIDYEMKTKAGTPYYVAPQVLTGCYDYKCDLWSAGVLFYIILCGYPPFYGESDHEILSMVKKGKYNFKGKEWNNISDEAKDLIKRCLTIDSGKRINASEALKHPWFKKKKGSFNLDVKMDIHVLENFKNYALLLKLQKLAMTIIAQQSNDYDLQQLKAVFLYLDEDGKGNITKNQLKKGLENSGLKLPQNFDVLLDQIDSDGSGRIDYTEFLAAALDRKHLSKKLIYCAFRVFDVDNDGEITTAELAHVTFFVILFLHHVNDFPRLENCTKYIDLNA.

The segment at 23–70 (PKKSIERIKKKKDSNKSIKSQHKFEGSKISNKNNELKDVKSKDPKNYE) is disordered. Residues 56-68 (NELKDVKSKDPKN) show a composition bias toward basic and acidic residues. In terms of domain architecture, Protein kinase spans 112–367 (NLSEEPLGKG…ASEALKHPWF (256 aa)). ATP is bound by residues 118-126 (LGKGTYGCV) and Lys-141. Asp-232 (proton acceptor) is an active-site residue. A J domain autoinhibitory motif motif is present at residues 387 to 395 (NFKNYALLL). Positions 387–422 (NFKNYALLLKLQKLAMTIIAQQSNDYDLQQLKAVFL) are j domain. The J domain EF-hand interaction motif signature appears at 396 to 405 (KLQKLAMTII). 3 consecutive EF-hand domains span residues 412-447 (YDLQQLKAVFLYLDEDGKGNITKNQLKKGLENSGLK), 450-481 (QNFDVLLDQIDSDGSGRIDYTEFLAAALDRKH), and 482-517 (LSKKLIYCAFRVFDVDNDGEITTAELAHVTFFVILF). The Ca(2+) site is built by Asp-460, Asp-462, Ser-464, Arg-466, Glu-471, Asp-495, Asp-497, Asp-499, Glu-501, and Glu-506.

It belongs to the protein kinase superfamily. Ser/Thr protein kinase family. CDPK subfamily. It depends on Mg(2+) as a cofactor.

The protein resides in the cytoplasm. The enzyme catalyses L-seryl-[protein] + ATP = O-phospho-L-seryl-[protein] + ADP + H(+). It carries out the reaction L-threonyl-[protein] + ATP = O-phospho-L-threonyl-[protein] + ADP + H(+). Its activity is regulated as follows. Activated by calcium. Upon calcium binding to the EF-hand domain 2, the C-terminus of the junction domain (J domain) undergoes a conformational change which results in the dissociation of the pseudo-substrate inhibitory motif from the catalytic domain. This, in turn, may facilitate the autophosphorylation of the activation loop at Thr-273, which leads to the kinase activation. Calcium-dependent protein kinase which acts as a sensor and effector of intracellular Ca(2+) levels probably in part downstream of cGMP-activated PKG kinase. In the mosquito midgut, regulates the gliding motility of the ookinete which is essential for the ookinete to invade the midgut epithelium. However, another study showed that while required for ookinete invasion of the midgut epithelium, is not required for ookinete gliding motility. The chain is Calcium-dependent protein kinase 3 from Plasmodium yoelii yoelii.